The following is an 86-amino-acid chain: Small ribosomal subunit protein uS17 (86 aa).

This sequence belongs to the universal ribosomal protein uS17 family. In terms of assembly, part of the 30S ribosomal subunit.

Functionally, one of the primary rRNA binding proteins, it binds specifically to the 5'-end of 16S ribosomal RNA. This is Small ribosomal subunit protein uS17 from Rhizorhabdus wittichii (strain DSM 6014 / CCUG 31198 / JCM 15750 / NBRC 105917 / EY 4224 / RW1) (Sphingomonas wittichii).